The primary structure comprises 408 residues: Tripartite motif-containing protein 59 (408 aa).

The RING-type zinc-finger motif lies at 10-60 (CSICYSLFEDPRVLPCSHTFCRSCLEGVIQLSSNFSIWRPLRVPLKCPNCR). The segment at 92 to 134 (SDVATCSEHYRQPLNVYCLLDKKLVCGHCLTIGKHNGHPIDDL) adopts a B box-type zinc-finger fold. Cys97, His100, Cys120, and His126 together coordinate Zn(2+). Residues 163 to 247 (LIEKLKEQKA…LNTSIQKEES (85 aa)) adopt a coiled-coil conformation. Residues 333–353 (ANPLSVTFIFTVIIAIAVLSF) form a helical membrane-spanning segment.

It belongs to the TRIM/RBCC family. In terms of assembly, interacts with ECSIT.

The protein resides in the endoplasmic reticulum membrane. In terms of biological role, may serve as a multifunctional regulator for innate immune signaling pathways. The chain is Tripartite motif-containing protein 59 (TRIM59) from Gallus gallus (Chicken).